The following is a 637-amino-acid chain: Threonine--tRNA ligase (637 aa).

The TGS domain maps to 1–61; it reads MVTVTLPDGS…DADAQLAIVT (61 aa). Positions 244–535 are catalytic; that stretch reads DHRRLAKQLD…LIEHHAGNFP (292 aa). C335, H386, and H512 together coordinate Zn(2+).

This sequence belongs to the class-II aminoacyl-tRNA synthetase family. In terms of assembly, homodimer. Zn(2+) serves as cofactor.

It localises to the cytoplasm. The enzyme catalyses tRNA(Thr) + L-threonine + ATP = L-threonyl-tRNA(Thr) + AMP + diphosphate + H(+). Functionally, catalyzes the attachment of threonine to tRNA(Thr) in a two-step reaction: L-threonine is first activated by ATP to form Thr-AMP and then transferred to the acceptor end of tRNA(Thr). Also edits incorrectly charged L-seryl-tRNA(Thr). This chain is Threonine--tRNA ligase, found in Thiobacillus denitrificans (strain ATCC 25259 / T1).